A 791-amino-acid polypeptide reads, in one-letter code: uncharacterized protein (791 aa).

4 helical membrane passes run 104–124 (MWIL…FFLM), 131–151 (IAAI…YYII), 177–197 (ACLY…TLII), and 226–246 (WSGL…PSVL). The N-linked (GlcNAc...) asparagine glycan is linked to asparagine 265. 8 helical membrane-spanning segments follow: residues 274 to 294 (FFIV…IFPA), 309 to 329 (SAVL…PLTL), 346 to 366 (WATC…LPGL), 421 to 441 (FIIN…SFFL), 471 to 491 (VHWG…FAFT), 501 to 521 (SYGF…LSLI), 533 to 553 (AFFE…LLYF), and 583 to 603 (LVAA…SAVT). Asparagine 621 carries an N-linked (GlcNAc...) asparagine glycan. Helical transmembrane passes span 653–673 (FVMW…LLQI), 697–717 (SVTG…NYLI), and 733–753 (AAAM…CVVY). Asparagine 759 carries an N-linked (GlcNAc...) asparagine glycan.

It belongs to the oligopeptide OPT transporter family.

It is found in the membrane. This is an uncharacterized protein from Schizosaccharomyces pombe (strain 972 / ATCC 24843) (Fission yeast).